A 659-amino-acid chain; its full sequence is MGSSSLLLFPSSSSSATHSSYSPSSSSHAITSLLPPLPSDHHLLLYLDHQEQHHLAAAMVRKRPASDMDLPPPRRHVTGDLSDVTAAAAPSSASAQLPALPTQLPAFHHTDMDLAAPAPPPPQQQVAAGEGGPPSTAWVDGIIRDIIASSGAAVSVAQLIHNVREIIRPCNPDLASILELRLRSLLTSDPAPPPPPPPSHPALLPPDATAPPPPPTSVAALPPPPPPQPDKRRREPQCQEQEPNQPQSPKPPTAEETAAAAAAAAAAALAAAKERKEEQRRKQRDEEGLHLLTLLLQCAESVNADNLDEAHRALLEIAELATPFGTSTQRVAAYFAEAMSARLVSSCLGLYAPLPNPSPAAARLHGRVAAAFQVFNGISPFVKFSHFTANQAIQEAFEREERVHIIDLDIMQGLQWPGLFHILASRPGGPPRVRLTGLGASMEALEATGKRLSDFADTLGLPFEFCPVADKAGNLDPEKLGVTRREAVAVHWLRHSLYDVTGSDSNTLWLIQRLAPKVVTMVEQDLSHSGSFLARFVEAIHYYSALFDSLDASYSEDSPERHVVEQQLLSREIRNVLAVGGPARTGDVKFGSWREKLAQSGFRVSSLAGSAAAQAALLLGMFPSDGYTLIEENGALKLGWKDLCLLTASAWRPIQASGR.

Disordered regions lie at residues 1–33 and 188–285; these read MGSS…ITSL and SDPA…KQRD. Residues 190–228 show a composition bias toward pro residues; sequence PAPPPPPPPSHPALLPPDATAPPPPPTSVAALPPPPPPQ. Residues 258–271 are compositionally biased toward low complexity; the sequence is AAAAAAAAAAALAA. Residues 258 to 289 are a coiled coil; that stretch reads AAAAAAAAAAALAAAKERKEEQRRKQRDEEGL. The segment covering 272–285 has biased composition (basic and acidic residues); sequence AKERKEEQRRKQRD. One can recognise a GRAS domain in the interval 282–652; sequence KQRDEEGLHL…LCLLTASAWR (371 aa). The interval 289 to 353 is leucine repeat I (LRI); that stretch reads LHLLTLLLQC…VSSCLGLYAP (65 aa). The LxCxE motif motif lies at 296-300; sequence LQCAE. Residues 372–437 form a VHIID region; sequence FQVFNGISPF…GGPPRVRLTG (66 aa). The short motif at 403-407 is the VHIID element; sequence VHIID. The interval 447 to 479 is leucine repeat II (LRII); the sequence is ATGKRLSDFADTLGLPFEFCPVADKAGNLDPEK. Residues 488 to 575 are PFYRE; it reads VAVHWLRHSL…QQLLSREIRN (88 aa). Residues 578–652 are SAW; that stretch reads AVGGPARTGD…LCLLTASAWR (75 aa).

Belongs to the GRAS family. Interacts with SHR1, but not with SHR2.

Its subcellular location is the nucleus. Transcription factor required for quiescent center cells specification and maintenance of surrounding stem cells, and for the asymmetric cell division involved in radial pattern formation in roots. Essential for cell division but not differentiation of the ground tissue. Regulates the radial organization of the shoot axial organs. Restricts SHR movment and sequesters it into the nucleus of the endodermis. The polypeptide is Protein SCARECROW 1 (SCR1) (Oryza sativa subsp. indica (Rice)).